The primary structure comprises 485 residues: Glycogen synthase (485 aa).

Lysine 21 lines the ADP-alpha-D-glucose pocket.

Belongs to the glycosyltransferase 1 family. Bacterial/plant glycogen synthase subfamily.

The catalysed reaction is [(1-&gt;4)-alpha-D-glucosyl](n) + ADP-alpha-D-glucose = [(1-&gt;4)-alpha-D-glucosyl](n+1) + ADP + H(+). It participates in glycan biosynthesis; glycogen biosynthesis. Functionally, synthesizes alpha-1,4-glucan chains using ADP-glucose. The polypeptide is Glycogen synthase (Pseudomonas syringae pv. syringae (strain B728a)).